The sequence spans 525 residues: GMP synthase [glutamine-hydrolyzing] (525 aa).

The 199-residue stretch at 9–207 (RILILDFGSQ…VRDICQCEAL (199 aa)) folds into the Glutamine amidotransferase type-1 domain. Cys-86 (nucleophile) is an active-site residue. Catalysis depends on residues His-181 and Glu-183. A GMPS ATP-PPase domain is found at 208 to 400 (WTPAKIIDDA…LGLPYDMLYR (193 aa)). 235-241 (SGGVDSS) provides a ligand contact to ATP.

In terms of assembly, homodimer.

The catalysed reaction is XMP + L-glutamine + ATP + H2O = GMP + L-glutamate + AMP + diphosphate + 2 H(+). It functions in the pathway purine metabolism; GMP biosynthesis; GMP from XMP (L-Gln route): step 1/1. In terms of biological role, catalyzes the synthesis of GMP from XMP. The protein is GMP synthase [glutamine-hydrolyzing] of Enterobacter sp. (strain 638).